We begin with the raw amino-acid sequence, 237 residues long: Large ribosomal subunit protein uL2 (237 aa).

A compositionally biased stretch (polar residues) spans 1–11 (MGKRLISQNRG). Disordered stretches follow at residues 1 to 26 (MGKR…KRKG) and 204 to 237 (PYGG…SRRT). Composition is skewed to basic residues over residues 13-26 (GTPK…KRKG) and 228-237 (KVGHIASRRT).

The protein belongs to the universal ribosomal protein uL2 family. As to quaternary structure, part of the 50S ribosomal subunit. Forms a bridge to the 30S subunit in the 70S ribosome.

Functionally, one of the primary rRNA binding proteins. Required for association of the 30S and 50S subunits to form the 70S ribosome, for tRNA binding and peptide bond formation. It has been suggested to have peptidyltransferase activity; this is somewhat controversial. Makes several contacts with the 16S rRNA in the 70S ribosome. The protein is Large ribosomal subunit protein uL2 of Methanococcus vannielii.